Reading from the N-terminus, the 185-residue chain is Ribosome-recycling factor (185 aa).

This sequence belongs to the RRF family.

It localises to the cytoplasm. Responsible for the release of ribosomes from messenger RNA at the termination of protein biosynthesis. May increase the efficiency of translation by recycling ribosomes from one round of translation to another. This Klebsiella pneumoniae (strain 342) protein is Ribosome-recycling factor.